The chain runs to 165 residues: Cytochrome c-type biogenesis protein CcmE (165 aa).

The Cytoplasmic segment spans residues Met1–Arg29. The helical; Signal-anchor for type II membrane protein transmembrane segment at Leu30–Ala50 threads the bilayer. The Periplasmic segment spans residues Phe51 to Lys165. The heme site is built by His143 and Tyr147.

The protein belongs to the CcmE/CycJ family.

The protein localises to the cell inner membrane. Functionally, heme chaperone required for the biogenesis of c-type cytochromes. Transiently binds heme delivered by CcmC and transfers the heme to apo-cytochromes in a process facilitated by CcmF and CcmH. The chain is Cytochrome c-type biogenesis protein CcmE from Brucella anthropi (strain ATCC 49188 / DSM 6882 / CCUG 24695 / JCM 21032 / LMG 3331 / NBRC 15819 / NCTC 12168 / Alc 37) (Ochrobactrum anthropi).